The sequence spans 68 residues: Conotoxin TsMMSK-021 (68 aa).

A signal peptide spans 1–20; it reads MMSKLGVLLTICLLLFPLTA. The propeptide occupies 21–50; the sequence is VPLDGDQHADRPADRMQDISSEQHPLFDPV. Cystine bridges form between C53–C66, C54–C62, and C58–C65. 4-hydroxyproline is present on P64.

Belongs to the conotoxin M superfamily. In terms of tissue distribution, expressed by the venom duct.

Its subcellular location is the secreted. This chain is Conotoxin TsMMSK-021, found in Conus tessulatus (Tessellate cone).